The chain runs to 624 residues: Chaperone protein HtpG (624 aa).

The interval 1 to 336 (MKGQETRGFQ…SNDLPLNVSR (336 aa)) is a; substrate-binding. Positions 337-552 (EILQDSTVTR…ADEMSTQMAK (216 aa)) are b. Positions 553–624 (LFAAAGQSVP…IRRMNQLLVS (72 aa)) are c.

It belongs to the heat shock protein 90 family. In terms of assembly, homodimer.

It localises to the cytoplasm. In terms of biological role, molecular chaperone. Has ATPase activity. This Salmonella choleraesuis (strain SC-B67) protein is Chaperone protein HtpG.